A 218-amino-acid chain; its full sequence is Small ribosomal subunit protein uS3c (218 aa).

The region spanning 47–118 (VQKNIRISSG…KLNIAITRIS (72 aa)) is the KH type-2 domain.

This sequence belongs to the universal ribosomal protein uS3 family. Part of the 30S ribosomal subunit.

It is found in the plastid. Its subcellular location is the chloroplast. This Aethionema cordifolium (Lebanon stonecress) protein is Small ribosomal subunit protein uS3c (rps3).